Reading from the N-terminus, the 229-residue chain is Ribonuclease 3 (229 aa).

The RNase III domain maps to 5–134; sequence EQKLEQDFGI…FLGALYLDQG (130 aa). Glu-47 contacts Mg(2+). The active site involves Asp-51. Mg(2+) contacts are provided by Asp-120 and Glu-123. Glu-123 is an active-site residue. Residues 160–229 form the DRBM domain; that stretch reads DYKTALQERL…AKSALEQLGN (70 aa).

The protein belongs to the ribonuclease III family. Homodimer. Mg(2+) is required as a cofactor.

It localises to the cytoplasm. The enzyme catalyses Endonucleolytic cleavage to 5'-phosphomonoester.. Its function is as follows. Digests double-stranded RNA. Involved in the processing of primary rRNA transcript to yield the immediate precursors to the large and small rRNAs (23S and 16S). Also processes some mRNAs, and tRNAs when they are encoded in the rRNA operon. CRISPR (clustered regularly interspaced short palindromic repeat) is an adaptive immune system that provides protection against mobile genetic elements (viruses, transposable elements and conjugative plasmids). CRISPR clusters contain spacers, sequences complementary to antecedent mobile elements, and target invading nucleic acids. CRISPR clusters are transcribed and processed into CRISPR RNA (crRNA). In this organism endogenous ribonuclease 3 and Cas9 are required for correct coprocessing of pre-crRNA and the trans-encoded small RNA (tracrRNA). Cas9, crRNA and tracrRNA are required for cleavage of invading DNA. Complements pre-crRNA and tracRNA coprocessing defects in an rnc deletion in S.pyogenes strain 370. In Streptococcus thermophilus (strain ATCC BAA-491 / LMD-9), this protein is Ribonuclease 3.